We begin with the raw amino-acid sequence, 341 residues long: Biotin synthase (341 aa).

The 230-residue stretch at 56–285 folds into the Radical SAM core domain; that stretch reads ADIQRAALLS…KARVRLSAGR (230 aa). [4Fe-4S] cluster contacts are provided by C71, C75, and C78. [2Fe-2S] cluster-binding residues include C116, C148, C208, and R280.

The protein belongs to the radical SAM superfamily. Biotin synthase family. As to quaternary structure, homodimer. [4Fe-4S] cluster serves as cofactor. The cofactor is [2Fe-2S] cluster.

It carries out the reaction (4R,5S)-dethiobiotin + (sulfur carrier)-SH + 2 reduced [2Fe-2S]-[ferredoxin] + 2 S-adenosyl-L-methionine = (sulfur carrier)-H + biotin + 2 5'-deoxyadenosine + 2 L-methionine + 2 oxidized [2Fe-2S]-[ferredoxin]. It participates in cofactor biosynthesis; biotin biosynthesis; biotin from 7,8-diaminononanoate: step 2/2. Catalyzes the conversion of dethiobiotin (DTB) to biotin by the insertion of a sulfur atom into dethiobiotin via a radical-based mechanism. In Methylorubrum populi (strain ATCC BAA-705 / NCIMB 13946 / BJ001) (Methylobacterium populi), this protein is Biotin synthase.